The primary structure comprises 297 residues: MIKQRTLKRVVQTTGVGLHTGKKVTLTLRPTSANTGIIYRRTDLYPPVDLQVNVKSVGNTVLCTCLINEYGVQIFTVEHLSAAQAGLGIDNIIIELNAPEVPIMDGSASPFVCLLLDAGIEELNSAKKFLRLKQTVRVEDGEKWAELRPFNGFTLDFTIDFNHPAINVDTQHCFFNFSSASFVHNISRARTFGFMRDIKDLQSRGFALGGSFNSAIIIDDYRVLNEDGLRFDDEFVRHKMLDAIGDLFMCGHNLIGSFIAFKSGHTLNNKLLKTVLSCQEAWELATFSNASDLPLVF.

The Zn(2+) site is built by His-79, His-238, and Asp-242. His-265 acts as the Proton donor in catalysis.

It belongs to the LpxC family. It depends on Zn(2+) as a cofactor.

It catalyses the reaction a UDP-3-O-[(3R)-3-hydroxyacyl]-N-acetyl-alpha-D-glucosamine + H2O = a UDP-3-O-[(3R)-3-hydroxyacyl]-alpha-D-glucosamine + acetate. It functions in the pathway glycolipid biosynthesis; lipid IV(A) biosynthesis; lipid IV(A) from (3R)-3-hydroxytetradecanoyl-[acyl-carrier-protein] and UDP-N-acetyl-alpha-D-glucosamine: step 2/6. Functionally, catalyzes the hydrolysis of UDP-3-O-myristoyl-N-acetylglucosamine to form UDP-3-O-myristoylglucosamine and acetate, the committed step in lipid A biosynthesis. This is UDP-3-O-acyl-N-acetylglucosamine deacetylase from Blochmanniella pennsylvanica (strain BPEN).